Reading from the N-terminus, the 324-residue chain is UDP-N-acetylenolpyruvoylglucosamine reductase (324 aa).

Residues 38 to 217 (AGGLAELMFQ…IRAEMDAVRQ (180 aa)) enclose the FAD-binding PCMH-type domain. The active site involves arginine 183. Serine 232 functions as the Proton donor in the catalytic mechanism. Glutamate 302 is an active-site residue.

It belongs to the MurB family. FAD serves as cofactor.

Its subcellular location is the cytoplasm. The enzyme catalyses UDP-N-acetyl-alpha-D-muramate + NADP(+) = UDP-N-acetyl-3-O-(1-carboxyvinyl)-alpha-D-glucosamine + NADPH + H(+). The protein operates within cell wall biogenesis; peptidoglycan biosynthesis. Its function is as follows. Cell wall formation. This chain is UDP-N-acetylenolpyruvoylglucosamine reductase, found in Allorhizobium ampelinum (strain ATCC BAA-846 / DSM 112012 / S4) (Agrobacterium vitis (strain S4)).